The primary structure comprises 196 residues: Small ribosomal subunit protein uS4c (196 aa).

Positions 20–39 are disordered; sequence GLTRKTPKSGSNLKKKFHSG. An S4 RNA-binding domain is found at 89-152; it reads MRLDNILFRL…RSKCLVQNSI (64 aa).

This sequence belongs to the universal ribosomal protein uS4 family. Part of the 30S ribosomal subunit. Contacts protein S5. The interaction surface between S4 and S5 is involved in control of translational fidelity.

Its subcellular location is the plastid. The protein resides in the chloroplast. Its function is as follows. One of the primary rRNA binding proteins, it binds directly to 16S rRNA where it nucleates assembly of the body of the 30S subunit. In terms of biological role, with S5 and S12 plays an important role in translational accuracy. The sequence is that of Small ribosomal subunit protein uS4c (rps4) from Dendrocalamus giganteus (Giant bamboo).